A 284-amino-acid chain; its full sequence is Bifunctional protein FolD (284 aa).

Residues 166–168 (GAS) and Ile232 each bind NADP(+).

The protein belongs to the tetrahydrofolate dehydrogenase/cyclohydrolase family. As to quaternary structure, homodimer.

It carries out the reaction (6R)-5,10-methylene-5,6,7,8-tetrahydrofolate + NADP(+) = (6R)-5,10-methenyltetrahydrofolate + NADPH. The enzyme catalyses (6R)-5,10-methenyltetrahydrofolate + H2O = (6R)-10-formyltetrahydrofolate + H(+). It functions in the pathway one-carbon metabolism; tetrahydrofolate interconversion. Functionally, catalyzes the oxidation of 5,10-methylenetetrahydrofolate to 5,10-methenyltetrahydrofolate and then the hydrolysis of 5,10-methenyltetrahydrofolate to 10-formyltetrahydrofolate. This is Bifunctional protein FolD from Shewanella sp. (strain W3-18-1).